Here is a 184-residue protein sequence, read N- to C-terminus: UPF0301 protein Rsph17029_2659 (184 aa).

This sequence belongs to the UPF0301 (AlgH) family.

This is UPF0301 protein Rsph17029_2659 from Cereibacter sphaeroides (strain ATCC 17029 / ATH 2.4.9) (Rhodobacter sphaeroides).